A 151-amino-acid polypeptide reads, in one-letter code: Cytochrome c-type biogenesis protein CcmE (151 aa).

Over 1–9 (MKGLKKKRR) the chain is Cytoplasmic. Residues 10–30 (IQIIALAFVALAGSTALIGYA) form a helical; Signal-anchor for type II membrane protein membrane-spanning segment. The Periplasmic portion of the chain corresponds to 31–151 (MRDGINFFRS…FQHTEDQPQG (121 aa)). His123 and Tyr127 together coordinate heme.

Belongs to the CcmE/CycJ family.

The protein resides in the cell inner membrane. Functionally, heme chaperone required for the biogenesis of c-type cytochromes. Transiently binds heme delivered by CcmC and transfers the heme to apo-cytochromes in a process facilitated by CcmF and CcmH. The sequence is that of Cytochrome c-type biogenesis protein CcmE from Cereibacter sphaeroides (strain ATCC 17029 / ATH 2.4.9) (Rhodobacter sphaeroides).